Consider the following 391-residue polypeptide: 4-coumarate--CoA ligase (391 aa).

It belongs to the ATP-dependent AMP-binding enzyme family.

The catalysed reaction is (E)-4-coumarate + ATP + CoA = (E)-4-coumaroyl-CoA + AMP + diphosphate. Functionally, converts p-coumaric acid into p-coumaryl CoA. This is necessary for the activation of the photoactive yellow protein (PYP) chromophore. The polypeptide is 4-coumarate--CoA ligase (pcl) (Halorhodospira halophila (Ectothiorhodospira halophila)).